The following is a 309-amino-acid chain: Protease HtpX homolog (309 aa).

Helical transmembrane passes span 7–27 (AILL…IGGA) and 28–48 (SGAM…YWNS). H130 contributes to the Zn(2+) binding site. E131 is an active-site residue. H134 lines the Zn(2+) pocket. 2 helical membrane-spanning segments follow: residues 145-165 (VTAT…FFGG) and 173-193 (GLGV…AMLV). Residue E202 coordinates Zn(2+).

It belongs to the peptidase M48B family. It depends on Zn(2+) as a cofactor.

Its subcellular location is the cell inner membrane. This is Protease HtpX homolog from Rhodopseudomonas palustris (strain BisA53).